Here is a 231-residue protein sequence, read N- to C-terminus: Large ribosomal subunit protein uL1 (231 aa).

This sequence belongs to the universal ribosomal protein uL1 family. As to quaternary structure, part of the 50S ribosomal subunit.

In terms of biological role, binds directly to 23S rRNA. The L1 stalk is quite mobile in the ribosome, and is involved in E site tRNA release. Functionally, protein L1 is also a translational repressor protein, it controls the translation of the L11 operon by binding to its mRNA. The sequence is that of Large ribosomal subunit protein uL1 from Acinetobacter baumannii (strain AB0057).